The following is a 152-amino-acid chain: MFP1 attachment factor 1 (152 aa).

Disordered regions lie at residues 1–33 and 107–152; these read MAEIDSAQSQETVTQETQNKPMTTSFSIWPPTQ and DTVK…ETEP. The WPP stretch occupies residues 12–115; it reads TVTQETQNKP…IDTVKSRSAP (104 aa). Polar residues predominate over residues 134–152; the sequence is EPSSASGLTGEVSSVETEP.

In terms of assembly, interacts with WAP through its WPP domain. Binds to MFP1 and FPP proteins. In terms of tissue distribution, expressed in young tomato leaves, young fruits, and flowers (at protein level).

The protein resides in the nucleus envelope. It is found in the cytoplasm. The protein localises to the golgi apparatus. Its subcellular location is the nucleus. It localises to the nucleus matrix. This Solanum lycopersicum (Tomato) protein is MFP1 attachment factor 1 (MAF1).